The chain runs to 461 residues: pre-mRNA splicing regulator USH1G (461 aa).

ANK repeat units follow at residues 31 to 60, 64 to 93, and 97 to 126; these read DGMT…DPDK, WGNT…NIWC, and DYHT…KQSS. Residues 329-368 form a disordered region; it reads LGREDGGLDGAGTPRGRLHSSPSLDDDSLGSANSLQDRSC. Residues 385–447 enclose the SAM domain; sequence LEPETSPLET…KILGAVRRRR (63 aa). Position 422 is a phosphoserine (Ser422).

Part of a complex composed of USH1C, USH1G and MYO7A. Interacts with USH1C (via the first PDZ domain). Interacts with PDZD7. Interacts with CDH23 and PCDH15; these interactions may recruit USH1G to the plasma membrane. Interacts with intraflagellar transport proteins IFT20, IFT52 and IFT57. Interacts with splicing factors SF3B1, PRPF6, PRPF31 and SON. Interacts with the U4/U6.U5 tri-small nuclear ribonucleoprotein (tri-snRNP) complex in the presence of pre-mRNAs. Interacts (via SAM domain) with MAGI2 (via PDZ 6 domain); the interaction is triggered by phosphorylation of USH1G by CK2 and negatively regulates MAGI2-mediated endocytosis. Detected in stereocilia from cochlear hair cells (at protein level). Detected in retinal photoreceptor cell cilia (at protein level). Highly expressed in the cochlea, testis, cerebellum and eye, and low levels in brain, thymus and spleen. Significant signals detected in the neurosensory epithelium of inner ear cochlea and saccule, especially in inner and outer hair cells.

Its subcellular location is the cytoplasm. The protein localises to the cytosol. The protein resides in the cytoskeleton. It is found in the cell membrane. It localises to the cell projection. Its subcellular location is the cilium. The protein localises to the nucleus speckle. The protein resides in the nucleus. It is found in the cajal body. It localises to the microtubule organizing center. Its subcellular location is the centrosome. The protein localises to the photoreceptor inner segment. In terms of biological role, plays a role in pre-mRNA splicing by regulating the release and transfer of U4/U6.U5 tri-small nuclear ribonucleoprotein (tri-snRNP) complexes from their assembly site in Cajal bodies to nuclear speckles, thereby contributing to the assembly of the pre-catalytic spliceosome on target pre-mRNAs. May also participate in recycling of snRNPs back to Cajal bodies during splicing. Plays a role in regulating MAGI2-mediated endocytosis. Anchoring/scaffolding protein that is a part of the functional network formed by USH1C, USH1G, CDH23 and MYO7A that mediates mechanotransduction in cochlear hair cells. Required for normal development and maintenance of cochlear hair cell bundles. Required for normal hearing. The chain is pre-mRNA splicing regulator USH1G (Ush1g) from Mus musculus (Mouse).